Reading from the N-terminus, the 120-residue chain is Aspartate 1-decarboxylase (120 aa).

Ser25 acts as the Schiff-base intermediate with substrate; via pyruvic acid in catalysis. Ser25 bears the Pyruvic acid (Ser) mark. Thr57 contributes to the substrate binding site. Tyr58 functions as the Proton donor in the catalytic mechanism. 73–75 contacts substrate; sequence GAA.

This sequence belongs to the PanD family. As to quaternary structure, heterooctamer of four alpha and four beta subunits. It depends on pyruvate as a cofactor. Post-translationally, is synthesized initially as an inactive proenzyme, which is activated by self-cleavage at a specific serine bond to produce a beta-subunit with a hydroxyl group at its C-terminus and an alpha-subunit with a pyruvoyl group at its N-terminus.

The protein localises to the cytoplasm. The enzyme catalyses L-aspartate + H(+) = beta-alanine + CO2. The protein operates within cofactor biosynthesis; (R)-pantothenate biosynthesis; beta-alanine from L-aspartate: step 1/1. In terms of biological role, catalyzes the pyruvoyl-dependent decarboxylation of aspartate to produce beta-alanine. In Deinococcus deserti (strain DSM 17065 / CIP 109153 / LMG 22923 / VCD115), this protein is Aspartate 1-decarboxylase.